The primary structure comprises 216 residues: uncharacterized protein (216 aa).

Residues 18 to 47 form the 4Fe-4S ferredoxin-type domain; that stretch reads PPDSPIEDRCGSCNICVDSCPTGALVQGGQ. 7 residues coordinate [4Fe-4S] cluster: Cys27, Cys30, Cys33, Cys37, Cys79, Cys82, and Cys86.

This is an uncharacterized protein from Geobacillus stearothermophilus (Bacillus stearothermophilus).